A 493-amino-acid polypeptide reads, in one-letter code: Na(+)/H(+) antiporter subunit D (493 aa).

15 consecutive transmembrane segments (helical) span residues 3–23, 31–51, 77–97, 107–127, 129–149, 163–183, 203–223, 227–247, 251–271, 274–294, 299–319, 330–350, 370–390, 407–427, and 449–469; these read NFVILPILIPLLSAILLIFMT, IFSTAASAIGIVISGILVQTV, FASLLVLTTAIIGLLVGLYSF, SFYYSGVQFLLAGVSGAFLTG, LFNMYVFFELLLIASYMLIVL, IVFNIVSSALFVIGVGFLYAV, GLITVIGVLLLLVFGMKGGIF, FWLPGSYYAPPAAISALFGAL, VGLYAITRVFTLIFIHDTAFT, LMIWLAALTVIFGVIGSLAYS, IVIYNIITAVGVILFGVAVHT, LIHDMLIKGALFMLAGTLIAL, GWMFFISAISLAGIPPLSGFV, ISMLILLSSLLVLYSVLRIFI, and LYPAAIFLLLSLLFGLGTEWV.

The protein belongs to the CPA3 antiporters (TC 2.A.63) subunit D family. Forms a heterooligomeric complex that consists of seven subunits: MrpA, MrpB, MrpC, MrpD, MrpE, MrpF and MrpG.

Its subcellular location is the cell membrane. Functionally, mrp complex is a Na(+)/H(+) antiporter that is considered to be the major Na(+) excretion system in B.subtilis. Has a major role in Na(+) resistance and a minor role in Na(+)- and K(+)-dependent pH homeostasis as compared to TetB. MrpA may be the actual Na(+)/H(+) antiporter, although the six other Mrp proteins are all required for Na(+)/H(+) antiport activity and Na(+) resistance. MrpA is required for initiation of sporulation when external Na(+) concentration increases. Also transports Li(+) but not K(+), Ca(2+) or Mg(2+). The polypeptide is Na(+)/H(+) antiporter subunit D (mrpD) (Bacillus subtilis (strain 168)).